Consider the following 253-residue polypeptide: Triosephosphate isomerase (253 aa).

Substrate is bound at residue 9 to 11 (NWK). His-95 functions as the Electrophile in the catalytic mechanism. The Proton acceptor role is filled by Glu-167. Substrate-binding positions include Gly-173, Ser-213, and 234 to 235 (GG). Ser-213 is subject to Phosphoserine.

It belongs to the triosephosphate isomerase family. In terms of assembly, homodimer.

It localises to the cytoplasm. The enzyme catalyses D-glyceraldehyde 3-phosphate = dihydroxyacetone phosphate. Its pathway is carbohydrate biosynthesis; gluconeogenesis. It participates in carbohydrate degradation; glycolysis; D-glyceraldehyde 3-phosphate from glycerone phosphate: step 1/1. Functionally, involved in the gluconeogenesis. Catalyzes stereospecifically the conversion of dihydroxyacetone phosphate (DHAP) to D-glyceraldehyde-3-phosphate (G3P). The sequence is that of Triosephosphate isomerase from Bacillus licheniformis (strain ATCC 14580 / DSM 13 / JCM 2505 / CCUG 7422 / NBRC 12200 / NCIMB 9375 / NCTC 10341 / NRRL NRS-1264 / Gibson 46).